Reading from the N-terminus, the 200-residue chain is Shikimate kinase (200 aa).

41-46 (GVGKSS) is an ATP binding site. A Mg(2+)-binding site is contributed by Ser45. Substrate is bound by residues Asp63, Arg87, and Gly109. Arg147 is an ATP binding site. Arg166 contributes to the substrate binding site.

This sequence belongs to the shikimate kinase family. Monomer. Mg(2+) serves as cofactor.

Its subcellular location is the cytoplasm. It catalyses the reaction shikimate + ATP = 3-phosphoshikimate + ADP + H(+). It participates in metabolic intermediate biosynthesis; chorismate biosynthesis; chorismate from D-erythrose 4-phosphate and phosphoenolpyruvate: step 5/7. Functionally, catalyzes the specific phosphorylation of the 3-hydroxyl group of shikimic acid using ATP as a cosubstrate. The protein is Shikimate kinase of Caulobacter vibrioides (strain NA1000 / CB15N) (Caulobacter crescentus).